We begin with the raw amino-acid sequence, 312 residues long: uncharacterized protein (312 aa).

This is an uncharacterized protein from Escherichia coli O157:H7.